A 552-amino-acid chain; its full sequence is Glycosyltransferase family 92 protein RCOM_0530710 (552 aa).

The helical; Signal-anchor transmembrane segment at 12 to 34 (WNRFFWCTLLLVLSCVLFTASTF) threads the bilayer. Residues 277–520 (KPHEMCICTM…GTRAVEPPDW (244 aa)) form the GT92 domain.

Belongs to the glycosyltransferase 92 family.

The protein localises to the membrane. The chain is Glycosyltransferase family 92 protein RCOM_0530710 from Ricinus communis (Castor bean).